A 102-amino-acid polypeptide reads, in one-letter code: MYAIIKNGGKQYKVKEGDIICFDKMGLEPKTKVEFKEVLAVDNGELKVGTPFVEGAVVEGEVINEGRGKKVIIFKKRRRKDSKVKRGFRRDFTRVKITAINA.

Belongs to the bacterial ribosomal protein bL21 family. In terms of assembly, part of the 50S ribosomal subunit. Contacts protein L20.

This protein binds to 23S rRNA in the presence of protein L20. This Nitratiruptor sp. (strain SB155-2) protein is Large ribosomal subunit protein bL21.